The chain runs to 259 residues: Putative aldolase class 2 protein PA3430 (259 aa).

Zn(2+) contacts are provided by histidine 113, histidine 115, and histidine 176.

This sequence belongs to the aldolase class II family. The cofactor is Zn(2+).

The chain is Putative aldolase class 2 protein PA3430 from Pseudomonas aeruginosa (strain ATCC 15692 / DSM 22644 / CIP 104116 / JCM 14847 / LMG 12228 / 1C / PRS 101 / PAO1).